A 476-amino-acid polypeptide reads, in one-letter code: Cysteine--tRNA ligase (476 aa).

Cysteine 28 serves as a coordination point for Zn(2+). Residues 30 to 40 carry the 'HIGH' region motif; that stretch reads PTVYDHTHLGH. Residues cysteine 208, histidine 233, and glutamate 237 each contribute to the Zn(2+) site. A 'KMSKS' region motif is present at residues 265-269; the sequence is KMSKS. Lysine 268 contacts ATP.

Belongs to the class-I aminoacyl-tRNA synthetase family. Zn(2+) is required as a cofactor.

The protein resides in the cytoplasm. The enzyme catalyses tRNA(Cys) + L-cysteine + ATP = L-cysteinyl-tRNA(Cys) + AMP + diphosphate. This Methanococcus maripaludis (strain C7 / ATCC BAA-1331) protein is Cysteine--tRNA ligase.